The following is a 350-amino-acid chain: GTPase Obg (350 aa).

An Obg domain is found at 1–159 (MKLVDEAEIL…RLLKLELRLL (159 aa)). A disordered region spans residues 127-146 (NMHFKSSVNRAPRQSTTGEE). The segment covering 130-143 (FKSSVNRAPRQSTT) has biased composition (polar residues). The OBG-type G domain occupies 160-337 (ADVGLLGFPN…IMKDVMAFFD (178 aa)). GTP-binding positions include 166–173 (GFPNAGKS), 191–195 (FTTLY), 213–216 (DVPG), 287–290 (NKAD), and 318–320 (SAL). Serine 173 and threonine 193 together coordinate Mg(2+).

The protein belongs to the TRAFAC class OBG-HflX-like GTPase superfamily. OBG GTPase family. In terms of assembly, monomer. Requires Mg(2+) as cofactor.

Its subcellular location is the cytoplasm. In terms of biological role, an essential GTPase which binds GTP, GDP and possibly (p)ppGpp with moderate affinity, with high nucleotide exchange rates and a fairly low GTP hydrolysis rate. Plays a role in control of the cell cycle, stress response, ribosome biogenesis and in those bacteria that undergo differentiation, in morphogenesis control. This Xanthomonas oryzae pv. oryzae (strain MAFF 311018) protein is GTPase Obg.